The primary structure comprises 213 residues: Orotate phosphoribosyltransferase (213 aa).

Lysine 26 provides a ligand contact to 5-phospho-alpha-D-ribose 1-diphosphate. 34-35 (FF) is a binding site for orotate. 5-phospho-alpha-D-ribose 1-diphosphate is bound by residues 72 to 73 (YK), arginine 99, lysine 100, lysine 103, histidine 105, and 124 to 132 (DDVITAGTA). The orotate site is built by threonine 128 and arginine 156.

The protein belongs to the purine/pyrimidine phosphoribosyltransferase family. PyrE subfamily. Homodimer. Requires Mg(2+) as cofactor.

It carries out the reaction orotidine 5'-phosphate + diphosphate = orotate + 5-phospho-alpha-D-ribose 1-diphosphate. Its pathway is pyrimidine metabolism; UMP biosynthesis via de novo pathway; UMP from orotate: step 1/2. Catalyzes the transfer of a ribosyl phosphate group from 5-phosphoribose 1-diphosphate to orotate, leading to the formation of orotidine monophosphate (OMP). The protein is Orotate phosphoribosyltransferase of Vibrio vulnificus (strain YJ016).